A 662-amino-acid chain; its full sequence is MKQNAIQPANLEFNAEGTPVSRDFDDVYFSNDNGLEETRYVFLGGNRLPERFPSHPRPLMIVAESGFGTGLNFLTLWQAFDVFVRDNPNVTLQRLHFISFEKYPLKAEDLRLAHQRWPELAPWAQQLQAQWPSAFGGCHRLLLDGGRVTLDLWFGDINELTRELDDSLNQQVDAWFLDGFAPAKNPDMWTQDLFSAMARLARPGGTLATFTSAGFVRRGLQEAGFTMRKSKGFGRKREMLTGEMAQTLSFPARVPWFARSSSDAREAAIIGGGIASALLSLALLRRGWQVTLYCADEAPAQGASGNRQGALYPLLSQHDPALARFFPAAFTFARRMYDALPVMFDHQWCGVTQLGWDEKSTHKIAQMLALNLPPDIACAVTAEQVAGLTGVDTGCGGITYPAGGWLCPQQLTAELLALAATRGLHVHYGYPVETLSAEGDGWLLNQQRYHQAVVLANGHRITGFAQTAQLPVYPVGGQVSHIPTTPRLAALRQVLCYDGYLTPQNPQNQQHCIGASYHRGNTDTTFSEEDQQHNRQRLIDCFPGAEWPQDVDISANDARCGVRCATRDHLPMVGNVPDYAATLTQYASLHEQPDIADSAPVCRNLFMLGALGSRGLCTAPLSAELLAAQMSAEPLPLDSDTLAALNPNRLWVRKLLKGKAVK.

A tRNA (mnm(5)s(2)U34)-methyltransferase region spans residues M1–A245. An FAD-dependent cmnm(5)s(2)U34 oxidoreductase region spans residues I270–K662.

This sequence in the N-terminal section; belongs to the methyltransferase superfamily. tRNA (mnm(5)s(2)U34)-methyltransferase family. In the C-terminal section; belongs to the DAO family. The cofactor is FAD.

The protein resides in the cytoplasm. The enzyme catalyses 5-aminomethyl-2-thiouridine(34) in tRNA + S-adenosyl-L-methionine = 5-methylaminomethyl-2-thiouridine(34) in tRNA + S-adenosyl-L-homocysteine + H(+). Functionally, catalyzes the last two steps in the biosynthesis of 5-methylaminomethyl-2-thiouridine (mnm(5)s(2)U) at the wobble position (U34) in tRNA. Catalyzes the FAD-dependent demodification of cmnm(5)s(2)U34 to nm(5)s(2)U34, followed by the transfer of a methyl group from S-adenosyl-L-methionine to nm(5)s(2)U34, to form mnm(5)s(2)U34. This is tRNA 5-methylaminomethyl-2-thiouridine biosynthesis bifunctional protein MnmC from Klebsiella pneumoniae subsp. pneumoniae (strain ATCC 700721 / MGH 78578).